The chain runs to 603 residues: uncharacterized protein (603 aa).

The region spanning 4–79 (YRIRVTTVDQ…VTFHLVIAVF (76 aa)) is the Ubiquitin-like domain. 3 disordered regions span residues 85 to 121 (TLPS…PEEL), 159 to 178 (SLPT…NSVS), and 206 to 348 (AQES…NQPF). Polar residues-rich tracts occupy residues 94-117 (VPQS…TSLN) and 162-178 (THEQ…NSVS). Residues 219-231 (SSSSAPLASDQSP) are compositionally biased toward low complexity. Residues 246-264 (LGSNSGLNPRSPNSFSSPL) show a composition bias toward polar residues. Over residues 280–289 (SLSPLSNSSS) the composition is skewed to low complexity. A compositionally biased stretch (polar residues) spans 290-314 (INQVHQNETHGSTISVPNPNLSQMG). Positions 315-329 (PSHSSSVPSNLSPNP) are enriched in low complexity. Residues 330 to 348 (AQNENPSTTSIPSINNQPF) are compositionally biased toward polar residues. The chain crosses the membrane as a helical span at residues 496 to 516 (ILLTSIMSVVFLLQTGALAPF). The segment at 544–578 (TAQRVVEIPNETQTEDEQDGTNTPDNRADAEEREL) is disordered. Residue Thr566 is modified to Phosphothreonine. A compositionally biased stretch (basic and acidic residues) spans 569-578 (NRADAEEREL).

The protein resides in the endoplasmic reticulum membrane. This is an uncharacterized protein from Schizosaccharomyces pombe (strain 972 / ATCC 24843) (Fission yeast).